We begin with the raw amino-acid sequence, 943 residues long: Protein translocase subunit SecA (943 aa).

Residues Q90, 108 to 112 (GEGKT), and D509 contribute to the ATP site. Residues 534-561 (KPDNEHKPPIPQQRNSKSGGGFSANVDS) are disordered.

This sequence belongs to the SecA family. In terms of assembly, monomer and homodimer. Part of the essential Sec protein translocation apparatus which comprises SecA, SecYEG and auxiliary proteins SecDF. Other proteins may also be involved.

The protein localises to the cell inner membrane. The protein resides in the cellular thylakoid membrane. It localises to the cytoplasm. The catalysed reaction is ATP + H2O + cellular proteinSide 1 = ADP + phosphate + cellular proteinSide 2.. Part of the Sec protein translocase complex. Interacts with the SecYEG preprotein conducting channel. Has a central role in coupling the hydrolysis of ATP to the transfer of proteins into and across the cell membrane, serving as an ATP-driven molecular motor driving the stepwise translocation of polypeptide chains across the membrane. Its function is as follows. Probably participates in protein translocation into and across both the cytoplasmic and thylakoid membranes in cyanobacterial cells. The sequence is that of Protein translocase subunit SecA from Prochlorococcus marinus subsp. pastoris (strain CCMP1986 / NIES-2087 / MED4).